A 417-amino-acid chain; its full sequence is MLNNKIDFSKYDPKLWFAIEQEKKRQENHIELIASENYTSNYVMDVQGSQLTNKYAEGYPGKRYYGGCEYVDIIEELAIERAKKLFNADYANVQPHSGSQANFSVYTALLNPGDTILGMKLSHGGHLTHGSSVNFSGKMYNVISYGVDENGEINYEELLRLTKKYKPKMIIGGFSAYSGICNWKKMRFIADKADAYFVVDMAHVAGLVAAGIYPNPINYAHVVTSTTHKTLAGPRGGLILAKNGDDILYKKLNLSVFPGAQGGPLMHVIAAKAIAFKEALEPKFKTYQKQIVKNSKVMVERFLEKGYKIISGHTFNHLFLIDLTNKKITGKDADIILSKANITVNKNTIPNDLKSPFITSGIRIGTAAVTRRGFKENEVSKISDWITSILNNVDDHNNVLQIKKKVLEMCLKYPVYI.

Residues leucine 121 and glycine 125–leucine 127 each bind (6S)-5,6,7,8-tetrahydrofolate. Residue lysine 229 is modified to N6-(pyridoxal phosphate)lysine. Position 355-357 (serine 355–phenylalanine 357) interacts with (6S)-5,6,7,8-tetrahydrofolate.

This sequence belongs to the SHMT family. Homodimer. Requires pyridoxal 5'-phosphate as cofactor.

The protein resides in the cytoplasm. It carries out the reaction (6R)-5,10-methylene-5,6,7,8-tetrahydrofolate + glycine + H2O = (6S)-5,6,7,8-tetrahydrofolate + L-serine. Its pathway is one-carbon metabolism; tetrahydrofolate interconversion. The protein operates within amino-acid biosynthesis; glycine biosynthesis; glycine from L-serine: step 1/1. Catalyzes the reversible interconversion of serine and glycine with tetrahydrofolate (THF) serving as the one-carbon carrier. This reaction serves as the major source of one-carbon groups required for the biosynthesis of purines, thymidylate, methionine, and other important biomolecules. Also exhibits THF-independent aldolase activity toward beta-hydroxyamino acids, producing glycine and aldehydes, via a retro-aldol mechanism. In Buchnera aphidicola subsp. Acyrthosiphon pisum (strain 5A), this protein is Serine hydroxymethyltransferase.